We begin with the raw amino-acid sequence, 402 residues long: Ubiquitin-like modifier-activating enzyme 5 (402 aa).

Residues glycine 81, aspartate 102, lysine 125, asparagine 148, and asparagine 182 each coordinate ATP. The Zn(2+) site is built by cysteine 224 and cysteine 227. Catalysis depends on cysteine 248, which acts as the Glycyl thioester intermediate. Zn(2+)-binding residues include cysteine 301 and cysteine 306. Positions 369-402 (EAPEKSSETSEETVTTAPPDDASLEDLMAQMKSM) are disordered.

The protein belongs to the ubiquitin-activating E1 family. UBA5 subfamily.

Its function is as follows. E1-like enzyme which activates UFM1. The polypeptide is Ubiquitin-like modifier-activating enzyme 5 (Drosophila erecta (Fruit fly)).